The chain runs to 309 residues: Homoserine O-succinyltransferase (309 aa).

The active-site Acyl-thioester intermediate is Cys-142. Substrate is bound by residues Lys-163 and Ser-192. His-235 serves as the catalytic Proton acceptor. The active site involves Glu-237. Arg-249 is a substrate binding site.

Belongs to the MetA family.

The protein localises to the cytoplasm. It carries out the reaction L-homoserine + succinyl-CoA = O-succinyl-L-homoserine + CoA. Its pathway is amino-acid biosynthesis; L-methionine biosynthesis via de novo pathway; O-succinyl-L-homoserine from L-homoserine: step 1/1. Transfers a succinyl group from succinyl-CoA to L-homoserine, forming succinyl-L-homoserine. This is Homoserine O-succinyltransferase from Citrobacter koseri (strain ATCC BAA-895 / CDC 4225-83 / SGSC4696).